The sequence spans 194 residues: Small ribosomal subunit protein uS7 (194 aa).

Belongs to the universal ribosomal protein uS7 family. In terms of assembly, part of the 30S ribosomal subunit.

Its function is as follows. One of the primary rRNA binding proteins, it binds directly to 16S rRNA where it nucleates assembly of the head domain of the 30S subunit. Is located at the subunit interface close to the decoding center. This Methanospirillum hungatei JF-1 (strain ATCC 27890 / DSM 864 / NBRC 100397 / JF-1) protein is Small ribosomal subunit protein uS7.